We begin with the raw amino-acid sequence, 106 residues long: Large ribosomal subunit protein uL24 (106 aa).

The segment covering 84–97 (EKIGRELGAKEKAR) has biased composition (basic and acidic residues). Residues 84–106 (EKIGRELGAKEKARLQKRKTAAK) form a disordered region.

This sequence belongs to the universal ribosomal protein uL24 family. In terms of assembly, part of the 50S ribosomal subunit.

One of two assembly initiator proteins, it binds directly to the 5'-end of the 23S rRNA, where it nucleates assembly of the 50S subunit. Its function is as follows. One of the proteins that surrounds the polypeptide exit tunnel on the outside of the subunit. The chain is Large ribosomal subunit protein uL24 from Anaeromyxobacter dehalogenans (strain 2CP-1 / ATCC BAA-258).